Here is a 2298-residue protein sequence, read N- to C-terminus: MKGHQFKSWIFELREILKEIKNSRYFLYSWTQFNSTGSFIHIFFHQESFIKLLDSRIWSILLSGNSQGSTSNRYFTIKDVVLFVVAILLYRINNRKMVERKNLYLTGLLPIPMNSIGPRNDTLEESFESSNINRLIVPLLYLPKEKKISESSFLDPKESTQVLPITKKCIMPESNWGSRWWRDWIRKKRDSSCKISNETVAGIEISFKEKDIKYLEFPFVYYMDDPIRKDHDWELFDRLSPRKRRNIINLNSGQLFEILVKDWISYLMFAFREKKPIEVEGFFKQQGAGSTIQSNDIEHVSHLFLRNKRAISLQNCAQFHMWQFRQDLFVSWGKKQPHESDFLRNISRENWIWLDNVWLVNKDRFFSKIRNVSSNIQYDSTRSSFIQVTDSSQLKGSSDQSRDHFDSIRNEDSKYDTLINQREIQQLKERSILCWDPSFLQTERTDIESERFRFPKSLSGYSSMCRLFMQREKQMNNHLLPEEIEEFLGNPTRADRFFFSDRWSELHLGSNPTERSTRDQKLLKKEQDVSFVLSKRSEKKEIVNIFKIILYLQNTVSIHPISSDPVCDMVPKDEPDSSNKMSFLNKNGLFHLFHDRNRGVYTLHHDFESEEIFQEMADLFNLSITEPDLVYHKGFAFSIDSSGLDQKQFLNEVFNSRDESKKKSLLVLPTLFYEENESFYRRIIKKWVQTSCGNDLEDPKPKIVVFTSNNIMEAVNQYRLIRNLIPIQYITYGYGYIRNVLNRFIQKNRFDRNFEYRIQRYQIENDTLNHRTRMKYTINQHFSNLKKKSQKKWFDSLILISRTERSMNRDPNAYRYKWSNGNKNFQEHLDHFISEQNSRFQVVFDRLRINQYSIDWSEVIDKKDLSKSLCFFLYKFLLFFSKFLLFLSKSLPFFFVSFGSIPIHRSEIHIYELKSPNHPLCNQLFESIGLQIVHLKKWKPFLLDDHDTSQKSRFLINGGTISPFLFNKIPKWMIDSFDTIKNRRKFFDNTDSYFSMISHDEDNWLNPVKPFHRSSLISSFYKANRLRFLNNRYHFCFYCNKRLPFYVEKACINNYDFTYGQFLNILFIRNKRFSLCGGKKKHAFLERDTISPIESRVFNILILNDFPQSGDEGYNLYKSFHFPIRSDPFVHRAIYSIADISVTPLTEGQIVNFERTYCQPLSDMNLPDSEGKNLHQYLKFNSNMGLIHIPCSEKYLPSENRKKGIPCLKKCLEKGQMYRTFQRDSVFSTLSKWNLFQTYIPWFLTSTGYKYLNFIFLDTFSDLLPILSSSQKFVSIFHDIMHRSDISWRILQKKWCLSQWNLISEISSKCFHNLLLSEEIIHRNNESPLISTHLRSLNVREFLYSILFLLLVAGYLVRTHLLFVSRVYSELQTEFEKVKSLMIPSYMIELRKLLDRYPTSEQNSFWLKNLFLVTLEQLGNSLEEIRSSASGGNMLWGGGSAYGVKSIRSKKKYLNLIDLISIIPNPINRIAFSRNMRHLSHTSKAIYSLIRKIKNVNGDWIDDKIESWVSNSDSIDDKEREFLVQFSTLTTEKRIDQILLSLTHSDHLSKNNSGYQMIEQPGTIYLRYLVDIQKKYLMNYEFNTSCLVEKRIFLAHYQTITYSQTLCGTNSFHFSSHGKPFSLRLALSPPRGLLVIGSIGTGRSYLVKYLAANSYVPFIRVFLNKFLDNKPKGFLIDDSDDIDDIDDSHDIDDIDDSNDSDDIDRDLDTELELLTMMNALTMDMMPEIDRFYITLQFELAKAMSPCIIWIPNIHDLDVNESNSLSLGLLANHLSRDCERCSTRNILVIASTHIPQKVDPALIAPNKLNTCIKIRRLLIPQQRKHFFTLSYTRRFHFEKKMFHTNGFGSITLGSNVQDLVALTNEALSISIIQKKSIIDTNLIRSALHKQTWDLRSQVRSVQDHGILFYQIGRAVSQNVLLSNCSIDPISIYMKKKSCNEGDSYLYKWYFELGTSMKNLTILLYLLSCSAGAVAQDLWSLPGPDEKNGITSYGLVENDSDLVHGLLEVEGALVGSSRTEKDCSQFDNDRVTLLLRPEPSNPLNMIQNGSCSIVDQRFLYEKYESEFEEGEGVLDLQQIEEDLFNHIVWAPRIWCPWGFLFDCIERPNELGFPYWARSFRGKRIIYDEEDELQENDSEFLQGGTMQYQTQDRSSKEQGFFRISQFIWDPTDPLFFLFKDQPFVSVFSHREFFADEEISRGLLTFQTDLPTSIYKRWFIKNTQEKHFELLIHRQRWLRTNNSLSNGFFRSNTLSESYQYLSNMFLSNGTLLDQMTKTLLRKRWLFPDEMVVAICSNNESLV.

Residue 1637-1644 participates in ATP binding; that stretch reads GSIGTGRS.

This sequence belongs to the Ycf2 family.

The protein localises to the plastid. It localises to the chloroplast stroma. Functionally, probable ATPase of unknown function. Its presence in a non-photosynthetic plant (Epifagus virginiana) and experiments in tobacco indicate that it has an essential function which is probably not related to photosynthesis. The chain is Protein Ycf2 from Lotus japonicus (Lotus corniculatus var. japonicus).